The primary structure comprises 658 residues: Carnitine O-palmitoyltransferase 2, mitochondrial (658 aa).

Residues 1 to 25 constitute a mitochondrion transit peptide; sequence MMPRLLLRDWPRCPSLVLGAPSRPL. The Mitochondrial matrix segment spans residues 26 to 178; sequence SAVSGPAEYL…GLLEPEVFHL (153 aa). At K69 the chain carries N6-succinyllysine. The residue at position 79 (K79) is an N6-acetyllysine. An N6-succinyllysine modification is found at K85. The note=Mitochondrial inner membrane intramembrane region spans 179-208; the sequence is NPARSDTDAFKRLIRFVPSSLSWYGAYLVN. Topologically, residues 209–658 are mitochondrial matrix; sequence AYPLDMSQYF…DALEGKAIKT (450 aa). N6-acetyllysine; alternate is present on K239. N6-succinyllysine; alternate is present on K239. K305 carries the N6-acetyllysine modification. Residue H372 is the Proton acceptor of the active site. The residue at position 418 (K418) is an N6-acetyllysine; alternate. The residue at position 418 (K418) is an N6-succinyllysine; alternate. K424 and K439 each carry N6-succinyllysine. 452-464 provides a ligand contact to CoA; the sequence is GKEFLKKKKLSPD. 3 residues coordinate (R)-carnitine: Y486, S488, and T499. N6-acetyllysine; alternate is present on residues K510 and K544. N6-succinyllysine; alternate is present on residues K510 and K544.

Belongs to the carnitine/choline acetyltransferase family.

The protein resides in the mitochondrion inner membrane. It catalyses the reaction (R)-carnitine + hexadecanoyl-CoA = O-hexadecanoyl-(R)-carnitine + CoA. It carries out the reaction octanoyl-CoA + (R)-carnitine = O-octanoyl-(R)-carnitine + CoA. The enzyme catalyses decanoyl-CoA + (R)-carnitine = O-decanoyl-(R)-carnitine + CoA. The catalysed reaction is dodecanoyl-CoA + (R)-carnitine = O-dodecanoyl-R-carnitine + CoA. It catalyses the reaction tetradecanoyl-CoA + (R)-carnitine = O-tetradecanoyl-(R)-carnitine + CoA. It carries out the reaction (R)-carnitine + octadecanoyl-CoA = O-octadecanoyl-(R)-carnitine + CoA. The enzyme catalyses eicosanoyl-CoA + (R)-carnitine = O-eicosanoyl-(R)-carnitine + CoA. The catalysed reaction is (9Z)-tetradecenoyl-CoA + (R)-carnitine = O-(9Z)-tetradecenoyl-(R)-carnitine + CoA. It catalyses the reaction (5Z)-tetradecenoyl-CoA + (R)-carnitine = O-(5Z)-tetradecenoyl-(R)-carnitine + CoA. It carries out the reaction (R)-carnitine + (9Z)-octadecenoyl-CoA = O-(9Z)-octadecenoyl-(R)-carnitine + CoA. The enzyme catalyses 4,8-dimethylnonanoyl-CoA + (R)-carnitine = O-4,8-dimethylnonanoyl-(R)-carnitine + CoA. The protein operates within lipid metabolism; fatty acid beta-oxidation. Involved in the intramitochondrial synthesis of acylcarnitines from accumulated acyl-CoA metabolites. Reconverts acylcarnitines back into the respective acyl-CoA esters that can then undergo beta-oxidation, an essential step for the mitochondrial uptake of long-chain fatty acids and their subsequent beta-oxidation in the mitochondrion. Active with medium (C8-C12) and long-chain (C14-C18) acyl-CoA esters. The protein is Carnitine O-palmitoyltransferase 2, mitochondrial of Mus musculus (Mouse).